A 181-amino-acid chain; its full sequence is Isopentenyl-diphosphate Delta-isomerase (181 aa).

Positions 29 and 36 each coordinate Mn(2+). The 134-residue stretch at 34–167 folds into the Nudix hydrolase domain; it reads PLHLAFSCYL…GWAISPWAAE (134 aa). Residue Cys-71 is part of the active site. His-73 provides a ligand contact to Mn(2+). Residue Glu-91 participates in Mg(2+) binding. Glu-118 and Glu-120 together coordinate Mn(2+). The active site involves Glu-120.

It belongs to the IPP isomerase type 1 family. Requires Mg(2+) as cofactor. The cofactor is Mn(2+).

The protein localises to the cytoplasm. The catalysed reaction is isopentenyl diphosphate = dimethylallyl diphosphate. It functions in the pathway isoprenoid biosynthesis; dimethylallyl diphosphate biosynthesis; dimethylallyl diphosphate from isopentenyl diphosphate: step 1/1. Its function is as follows. Catalyzes the 1,3-allylic rearrangement of the homoallylic substrate isopentenyl (IPP) to its highly electrophilic allylic isomer, dimethylallyl diphosphate (DMAPP). The polypeptide is Isopentenyl-diphosphate Delta-isomerase (Mycolicibacterium vanbaalenii (strain DSM 7251 / JCM 13017 / BCRC 16820 / KCTC 9966 / NRRL B-24157 / PYR-1) (Mycobacterium vanbaalenii)).